A 916-amino-acid chain; its full sequence is Oxoglutarate dehydrogenase (916 aa).

Belongs to the alpha-ketoglutarate dehydrogenase family. Homodimer. Part of the 2-oxoglutarate dehydrogenase (OGDH) complex composed of E1 (2-oxoglutarate dehydrogenase), E2 (dihydrolipoamide succinyltransferase) and E3 (dihydrolipoamide dehydrogenase); the complex contains multiple copies of the three enzymatic components (E1, E2 and E3). The cofactor is thiamine diphosphate.

It carries out the reaction N(6)-[(R)-lipoyl]-L-lysyl-[protein] + 2-oxoglutarate + H(+) = N(6)-[(R)-S(8)-succinyldihydrolipoyl]-L-lysyl-[protein] + CO2. Functionally, E1 component of the 2-oxoglutarate dehydrogenase (OGDH) complex which catalyzes the decarboxylation of 2-oxoglutarate, the first step in the conversion of 2-oxoglutarate to succinyl-CoA and CO(2). The polypeptide is Oxoglutarate dehydrogenase (sucA) (Buchnera aphidicola subsp. Baizongia pistaciae (strain Bp)).